Here is a 399-residue protein sequence, read N- to C-terminus: Probable 2-isopropylmalate synthase (399 aa).

The region spanning 20–272 (VRIFDTTLRD…RTGVNTKLLY (253 aa)) is the Pyruvate carboxyltransferase domain. D29, H210, H212, and N246 together coordinate a divalent metal cation.

This sequence belongs to the alpha-IPM synthase/homocitrate synthase family. In terms of assembly, homodimer. A divalent metal cation serves as cofactor.

It catalyses the reaction 3-methyl-2-oxobutanoate + acetyl-CoA + H2O = (2S)-2-isopropylmalate + CoA + H(+). It functions in the pathway amino-acid biosynthesis; L-leucine biosynthesis; L-leucine from 3-methyl-2-oxobutanoate: step 1/4. Its function is as follows. Catalyzes the condensation of the acetyl group of acetyl-CoA with 3-methyl-2-oxobutanoate (2-oxoisovalerate) to form 3-carboxy-3-hydroxy-4-methylpentanoate (2-isopropylmalate). The sequence is that of Probable 2-isopropylmalate synthase (leuA) from Ignicoccus hospitalis (strain KIN4/I / DSM 18386 / JCM 14125).